A 97-amino-acid chain; its full sequence is Small ribosomal subunit protein uS19 (97 aa).

Belongs to the universal ribosomal protein uS19 family.

Its function is as follows. Protein S19 forms a complex with S13 that binds strongly to the 16S ribosomal RNA. In Salinibacter ruber (strain DSM 13855 / M31), this protein is Small ribosomal subunit protein uS19.